A 98-amino-acid polypeptide reads, in one-letter code: Endoribonuclease antitoxin GhoS (98 aa).

In terms of assembly, monomer. In terms of processing, unlike other TA antitoxins, this protein is stable.

In terms of biological role, antitoxin component of a type V toxin-antitoxin (TA) system. Neutralizes the toxic effects of toxin GhoT by digesting ghoT transcripts in a sequence-specific manner. In concert with GhoT is involved in reducing cell growth during antibacterial stress. In Escherichia coli O157:H7, this protein is Endoribonuclease antitoxin GhoS.